The chain runs to 148 residues: Deoxyuridine 5'-triphosphate nucleotidohydrolase (148 aa).

Substrate contacts are provided by residues Arg-65–Gly-67, Asn-78, Thr-82–Asp-84, and Lys-92.

Belongs to the dUTPase family. It depends on Mg(2+) as a cofactor.

The catalysed reaction is dUTP + H2O = dUMP + diphosphate + H(+). It functions in the pathway pyrimidine metabolism; dUMP biosynthesis; dUMP from dCTP (dUTP route): step 2/2. Its function is as follows. This enzyme is involved in nucleotide metabolism: it produces dUMP, the immediate precursor of thymidine nucleotides and it decreases the intracellular concentration of dUTP so that uracil cannot be incorporated into DNA. The protein is Deoxyuridine 5'-triphosphate nucleotidohydrolase of Chlorobium luteolum (strain DSM 273 / BCRC 81028 / 2530) (Pelodictyon luteolum).